Here is a 539-residue protein sequence, read N- to C-terminus: Alpha-aminoadipic semialdehyde dehydrogenase (539 aa).

Residues 1 to 26 constitute a mitochondrion transit peptide; that stretch reads MWRVPRRLCVQSVKTSKLSGPWSRPA. 3 positions are modified to N6-acetyllysine; alternate: K86, K94, and K97. N6-succinyllysine; alternate occurs at positions 86, 94, and 97. Residues 192 to 194, K218, 258 to 259, 274 to 275, 274 to 279, and 296 to 297 each bind NAD(+); these read TAF, GT, GS, GSTQVG, and EL. The Proton acceptor role is filled by E296. C330 serves as the catalytic Nucleophile. T331 serves as a coordination point for (S)-2-amino-6-oxohexanoate. E427 contacts NAD(+). Position 462 is an N6-acetyllysine (K462). G489 and A490 together coordinate (S)-2-amino-6-oxohexanoate. N6-acetyllysine is present on K500. K537 bears the N6-succinyllysine mark.

Belongs to the aldehyde dehydrogenase family. Homotetramer. As to expression, present in liver, kidney, brain and pancreas, and at lower levels in jejunum, duodenum, stomach and testes (at protein level).

Its subcellular location is the cytoplasm. The protein localises to the cytosol. It is found in the nucleus. The protein resides in the mitochondrion. The catalysed reaction is nonanal + NAD(+) + H2O = nonanoate + NADH + 2 H(+). It catalyses the reaction (S)-2-amino-6-oxohexanoate + NAD(+) + H2O = L-2-aminoadipate + NADH + 2 H(+). The enzyme catalyses betaine aldehyde + NAD(+) + H2O = glycine betaine + NADH + 2 H(+). It carries out the reaction an aldehyde + NAD(+) + H2O = a carboxylate + NADH + 2 H(+). The catalysed reaction is hexanal + NAD(+) + H2O = hexanoate + NADH + 2 H(+). It catalyses the reaction octanal + NAD(+) + H2O = octanoate + NADH + 2 H(+). The enzyme catalyses (E)-non-2-enal + NAD(+) + H2O = (E)-non-2-enoate + NADH + 2 H(+). It carries out the reaction (E)-4-hydroxynon-2-enal + NAD(+) + H2O = (E)-4-hydroxynon-2-enoate + NADH + 2 H(+). It functions in the pathway amine and polyamine biosynthesis; betaine biosynthesis via choline pathway; betaine from betaine aldehyde: step 1/1. Its function is as follows. Multifunctional enzyme mediating important protective effects. Metabolizes betaine aldehyde to betaine, an important cellular osmolyte and methyl donor. Protects cells from oxidative stress by metabolizing a number of lipid peroxidation-derived aldehydes. Involved in lysine catabolism. The sequence is that of Alpha-aminoadipic semialdehyde dehydrogenase from Mus musculus (Mouse).